Here is a 910-residue protein sequence, read N- to C-terminus: Protein translocase subunit SecA (910 aa).

Residues Gln-89, 107-111, and Asp-502 each bind ATP; that span reads GEGKT. Residues Cys-894, Cys-896, Cys-905, and His-906 each contribute to the Zn(2+) site.

This sequence belongs to the SecA family. As to quaternary structure, monomer and homodimer. Part of the essential Sec protein translocation apparatus which comprises SecA, SecYEG and auxiliary proteins SecDF-YajC and YidC. The cofactor is Zn(2+).

The protein resides in the cell inner membrane. Its subcellular location is the cytoplasm. It catalyses the reaction ATP + H2O + cellular proteinSide 1 = ADP + phosphate + cellular proteinSide 2.. In terms of biological role, part of the Sec protein translocase complex. Interacts with the SecYEG preprotein conducting channel. Has a central role in coupling the hydrolysis of ATP to the transfer of proteins into and across the cell membrane, serving both as a receptor for the preprotein-SecB complex and as an ATP-driven molecular motor driving the stepwise translocation of polypeptide chains across the membrane. This is Protein translocase subunit SecA from Chelativorans sp. (strain BNC1).